Here is a 336-residue protein sequence, read N- to C-terminus: ATP-dependent 6-phosphofructokinase (336 aa).

Residue Gly-11 participates in ATP binding. 21–25 provides a ligand contact to ADP; that stretch reads RAVVR. ATP contacts are provided by residues 72–73 and 102–105; these read RY and GDGS. Asp-103 is a binding site for Mg(2+). 125–127 lines the substrate pocket; it reads TID. Residue Asp-127 is the Proton acceptor of the active site. Arg-154 is a binding site for ADP. Substrate contacts are provided by residues Arg-162 and 169–171; that span reads MGR. ADP is bound by residues 185–187, Lys-211, and 213–215; these read GAD and KKH. Substrate contacts are provided by residues Glu-222, Arg-244, and 250 to 253; that span reads HIQR.

Belongs to the phosphofructokinase type A (PFKA) family. ATP-dependent PFK group I subfamily. Prokaryotic clade 'B1' sub-subfamily. As to quaternary structure, homotetramer. The cofactor is Mg(2+).

It is found in the cytoplasm. The enzyme catalyses beta-D-fructose 6-phosphate + ATP = beta-D-fructose 1,6-bisphosphate + ADP + H(+). Its pathway is carbohydrate degradation; glycolysis; D-glyceraldehyde 3-phosphate and glycerone phosphate from D-glucose: step 3/4. Its activity is regulated as follows. Allosterically activated by ADP and other diphosphonucleosides, and allosterically inhibited by phosphoenolpyruvate. Catalyzes the phosphorylation of D-fructose 6-phosphate to fructose 1,6-bisphosphate by ATP, the first committing step of glycolysis. This chain is ATP-dependent 6-phosphofructokinase, found in Streptococcus sanguinis (strain SK36).